The sequence spans 186 residues: UPF0200 protein PF1294 (186 aa).

Residue G7–G14 coordinates ATP.

It belongs to the UPF0200 family.

The sequence is that of UPF0200 protein PF1294 from Pyrococcus furiosus (strain ATCC 43587 / DSM 3638 / JCM 8422 / Vc1).